The sequence spans 236 residues: Eukaryotic translation initiation factor 3 subunit J (236 aa).

Positions 1–86 (MADDWESAAD…KEEEEQKRLA (86 aa)) are disordered. A compositionally biased stretch (acidic residues) spans 28 to 46 (GEDDDEDVKESWEDEEEKK). Basic and acidic residues-rich tracts occupy residues 47–58 (DEEKPTKTEAPV) and 68–86 (AKLE…KRLA). The stretch at 61–115 (KPNKALKAKLEEQERLKEEEEQKRLAEMTPEEKLAEKLRLQKIQEESDLKSALET) forms a coiled coil.

It belongs to the eIF-3 subunit J family. Component of the eukaryotic translation initiation factor 3 (eIF-3) complex. The eIF-3 complex interacts with pix.

The protein resides in the cytoplasm. In terms of biological role, component of the eukaryotic translation initiation factor 3 (eIF-3) complex, which is involved in protein synthesis of a specialized repertoire of mRNAs and, together with other initiation factors, stimulates binding of mRNA and methionyl-tRNAi to the 40S ribosome. The eIF-3 complex specifically targets and initiates translation of a subset of mRNAs involved in cell proliferation. This is Eukaryotic translation initiation factor 3 subunit J from Drosophila mojavensis (Fruit fly).